The primary structure comprises 188 residues: Protein TIFY 9 (188 aa).

The tract at residues 20 to 41 (DADDRHAKSGGSSASSSSSIRG) is disordered. A compositionally biased stretch (low complexity) spans 28 to 38 (SGGSSASSSSS). The 35-residue stretch at 80–114 (AAAAAAPMTLFYNGSVAVFDVSHDKAEAIMRMATE) folds into the Tify domain. The Jas signature appears at 135–160 (PLTRTKSLQRFLSKRKERLTSLGPYQ). Positions 156-188 (LGPYQVGGPAAVGATTSTTTKSFLAKEEEHTAS) are disordered. Residues 179 to 188 (LAKEEEHTAS) are compositionally biased toward basic and acidic residues.

It belongs to the TIFY/JAZ family. In terms of processing, ubiquitinated. Targeted for degradation by the SCF(COI1) E3 ubiquitin ligase-proteasome pathway during jasmonate signaling.

Repressor of jasmonate responses. In Oryza sativa subsp. indica (Rice), this protein is Protein TIFY 9.